The chain runs to 336 residues: DNA polymerase III subunit delta' (336 aa).

DNA polymerase III contains a core (composed of alpha, epsilon and theta chains) that associates with a tau subunit. This core dimerizes to form the POLIII' complex. PolIII' associates with the gamma complex (composed of gamma, delta, delta', psi and chi chains) and with the beta chain to form the complete DNA polymerase III complex.

The catalysed reaction is DNA(n) + a 2'-deoxyribonucleoside 5'-triphosphate = DNA(n+1) + diphosphate. DNA polymerase III is a complex, multichain enzyme responsible for most of the replicative synthesis in bacteria. This DNA polymerase also exhibits 3' to 5' exonuclease activity. This chain is DNA polymerase III subunit delta' (holB), found in Buchnera aphidicola subsp. Baizongia pistaciae (strain Bp).